Consider the following 361-residue polypeptide: sn-glycerol-3-phosphate import ATP-binding protein UgpC (361 aa).

Residues 4-235 (LSLKGIRKSY…PETVFVAGFI (232 aa)) form the ABC transporter domain. 37–44 (GPSGCGKS) is an ATP binding site.

Belongs to the ABC transporter superfamily. sn-glycerol-3-phosphate importer (TC 3.A.1.1.3) family. In terms of assembly, the complex is composed of two ATP-binding proteins (UgpC), two transmembrane proteins (UgpA and UgpE) and a solute-binding protein (UgpB).

It is found in the cell inner membrane. It catalyses the reaction sn-glycerol 3-phosphate(out) + ATP + H2O = sn-glycerol 3-phosphate(in) + ADP + phosphate + H(+). Part of the ABC transporter complex UgpBAEC involved in sn-glycerol-3-phosphate (G3P) import. Responsible for energy coupling to the transport system. This is sn-glycerol-3-phosphate import ATP-binding protein UgpC from Burkholderia ambifaria (strain ATCC BAA-244 / DSM 16087 / CCUG 44356 / LMG 19182 / AMMD) (Burkholderia cepacia (strain AMMD)).